The primary structure comprises 611 residues: Alpha-1,2-mannosyltransferase ALG9 (611 aa).

Basic residues predominate over residues 1–10 (MASRGARQRL). The segment at 1 to 23 (MASRGARQRLKGSGASSGDTAPA) is disordered. At 1-135 (MASRGARQRL…FHARILQTNK (135 aa)) the chain is on the lumenal side. Asn77 is a glycosylation site (N-linked (GlcNAc...) asparagine). A helical transmembrane segment spans residues 136 to 156 (ILVFYFLRCLLAFVSCICELY). Residues 157–171 (FYKAVCKKFGLHVSR) lie on the Cytoplasmic side of the membrane. The chain crosses the membrane as a helical span at residues 172 to 192 (MMLAFLVLSTGMFCSSSAFLP). The Lumenal segment spans residues 193–213 (SSFCMYTTLIAMTGWYMDKTS). A helical membrane pass occupies residues 214–234 (IAVLGVAAGAILGWPFSAALG). Topologically, residues 235 to 249 (LPIAFDLLVMKHRWK) are cytoplasmic. Residues 250–270 (SFFHWSLMALILFLVPVVVID) traverse the membrane as a helical segment. Residues 271 to 304 (SYYYGKLVIAPLNIVLYNVFTPHGPDLYGTEPWY) lie on the Lumenal side of the membrane. Residues 305 to 325 (FYLINGFLNFNVAFALALLVL) form a helical membrane-spanning segment. Over 326 to 342 (PLTSLMEYLLQRFHVQN) the chain is Cytoplasmic. A helical transmembrane segment spans residues 343-363 (LGHPYWLTLAPMYIWFIIFFI). The Lumenal portion of the chain corresponds to 364–370 (QPHKEER). The chain crosses the membrane as a helical span at residues 371–391 (FLFPVYPLICLCGAVALSALQ). At 392 to 405 (KCYHFVFQRYRLEH) the chain is on the cytoplasmic side. Residues 406–426 (YTVTSNWLALGTVFLFGLLSF) form a helical membrane-spanning segment. Residues 427–611 (SRSVALFRGY…AKQIRKKSGG (185 aa)) lie on the Lumenal side of the membrane. A glycan (N-linked (GlcNAc...) asparagine) is linked at Asn593.

The protein belongs to the glycosyltransferase 22 family. Ubiquitously expressed; with highest levels in heart, liver and pancreas.

The protein resides in the endoplasmic reticulum membrane. It catalyses the reaction an alpha-D-Man-(1-&gt;2)-alpha-D-Man-(1-&gt;2)-alpha-D-Man-(1-&gt;3)-[alpha-D-Man-(1-&gt;3)-alpha-D-Man-(1-&gt;6)]-beta-D-Man-(1-&gt;4)-beta-D-GlcNAc-(1-&gt;4)-alpha-D-GlcNAc-diphospho-di-trans,poly-cis-dolichol + a di-trans,poly-cis-dolichyl beta-D-mannosyl phosphate = an alpha-D-Man-(1-&gt;2)-alpha-D-Man-(1-&gt;2)-alpha-D-Man-(1-&gt;3)-[alpha-D-Man-(1-&gt;2)-alpha-D-Man-(1-&gt;3)-alpha-D-Man-(1-&gt;6)]-beta-D-Man-(1-&gt;4)-beta-D-GlcNAc-(1-&gt;4)-alpha-D-GlcNAc-diphospho-di-trans,poly-cis-dolichol + a di-trans,poly-cis-dolichyl phosphate + H(+). The enzyme catalyses an alpha-D-Man-(1-&gt;2)-alpha-D-Man-(1-&gt;2)-alpha-D-Man-(1-&gt;3)-[alpha-D-Man-(1-&gt;2)-alpha-D-Man-(1-&gt;3)-[alpha-D-Man-(1-&gt;6)]-alpha-D-Man-(1-&gt;6)]-beta-D-Man-(1-&gt;4)-beta-D-GlcNAc-(1-&gt;4)-alpha-D-GlcNAc-diphospho-di-trans,poly-cis-dolichol + a di-trans,poly-cis-dolichyl beta-D-mannosyl phosphate = an alpha-D-Man-(1-&gt;2)-alpha-D-Man-(1-&gt;2)-alpha-D-Man-(1-&gt;3)-[alpha-D-Man-(1-&gt;2)-alpha-D-Man-(1-&gt;3)-[alpha-D-Man-(1-&gt;2)-alpha-D-Man-(1-&gt;6)]-alpha-D-Man-(1-&gt;6)]-beta-D-Man-(1-&gt;4)-beta-D-GlcNAc-(1-&gt;4)-alpha-D-GlcNAc-diphospho-di-trans,poly-cis-dolichol + a di-trans,poly-cis-dolichyl phosphate + H(+). The protein operates within protein modification; protein glycosylation. Its function is as follows. Mannosyltransferase that operates in the biosynthetic pathway of dolichol-linked oligosaccharides, the glycan precursors employed in protein asparagine (N)-glycosylation. The assembly of dolichol-linked oligosaccharides begins on the cytosolic side of the endoplasmic reticulum membrane and finishes in its lumen. The sequential addition of sugars to dolichol pyrophosphate produces dolichol-linked oligosaccharides containing fourteen sugars, including two GlcNAcs, nine mannoses and three glucoses. Once assembled, the oligosaccharide is transferred from the lipid to nascent proteins by oligosaccharyltransferases. In the lumen of the endoplasmic reticulum, catalyzes the addition of the seventh and ninth alpha-1,2-linked mannose residues to Man(6)GlcNAc(2)-PP-dolichol and Man(8)GlcNAc(2)-PP-dolichol respectively. The sequence is that of Alpha-1,2-mannosyltransferase ALG9 from Homo sapiens (Human).